The following is a 319-amino-acid chain: N-acetylneuraminate lyase (319 aa).

The aceneuramate site is built by threonine 51 and threonine 52. The active-site Proton donor is tyrosine 143. Lysine 173 (schiff-base intermediate with substrate) is an active-site residue. 5 residues coordinate aceneuramate: serine 175, glycine 199, aspartate 201, glutamate 202, and serine 218.

The protein belongs to the DapA family. NanA subfamily. In terms of assembly, homotetramer.

Its subcellular location is the cytoplasm. The enzyme catalyses aceneuramate = aldehydo-N-acetyl-D-mannosamine + pyruvate. Its pathway is amino-sugar metabolism; N-acetylneuraminate degradation. Functionally, catalyzes the cleavage of N-acetylneuraminic acid (sialic acid) to form pyruvate and N-acetylmannosamine via a Schiff base intermediate. It prevents sialic acids from being recycled and returning to the cell surface. Involved in the N-glycolylneuraminic acid (Neu5Gc) degradation pathway. The chain is N-acetylneuraminate lyase from Sus scrofa (Pig).